The primary structure comprises 76 residues: Small proline-rich protein 2F (76 aa).

Repeat copies occupy residues 21 to 29, 30 to 38, and 39 to 47. The 3 X 9 AA approximate tandem repeats stretch occupies residues 21 to 47; sequence PKCPEPCSPSVCPEPCPPPKCPEPCPE. Residues 53 to 76 are disordered; it reads SFQQKCPPVQPPPPCQQKCPPKSK.

It belongs to the cornifin (SPRR) family. As to expression, expressed in uterus.

It localises to the cytoplasm. Functionally, cross-linked envelope protein of keratinocytes. It is a keratinocyte protein that first appears in the cell cytosol, but ultimately becomes cross-linked to membrane proteins by transglutaminase. All that results in the formation of an insoluble envelope beneath the plasma membrane. The polypeptide is Small proline-rich protein 2F (Sprr2f) (Mus musculus (Mouse)).